The primary structure comprises 421 residues: MSSKSSLELANNAVKSNDIEKAIDLYKEVLNKGVSKDEKVANEQEQALTNLSDLYVRENRHNDLAQLVQQSRPLMANFSKAKSAKIVRTLIDKFSGEKKSLPLQIEVANDCIKWAIKEKRTFLRQALETKLISLYYDNSSYTDAINLINTLLSELKRMDDKMLLTEVHLLESKVYHAIRNIPKARASLTAAKTSANAVYCPPMLQGNLDLQSGILHADDMDFKTAYSYFYEAYEGFTSLDDDKKALSSLKYMLLSQIMLNSVSEVKSLLTGKHAIRYAGRDIEAMRAIAQAHENRSLADFEKALQDYKPELASDPIIRSHLSSLYDNLLEQNLLRVVEPFSRVEVSHIAELIGLSTVQVEGKLSQMILDKIFYGILDQGSGCLIVYDEPQQDKTYEAALEVIKNMGTVVDLLIENKASALL.

Residues 221 to 390 (DFKTAYSYFY…GCLIVYDEPQ (170 aa)) form the PCI domain.

Belongs to the proteasome subunit S9 family. As to quaternary structure, component of the lid subcomplex of the 19S proteasome regulatory particle complex (also named PA700 complex). The 26S proteasome consists of a 20S proteasome core and two 19S regulatory subunits.

In terms of biological role, component of the lid subcomplex of the 26S proteasome, a multiprotein complex involved in the ATP-dependent degradation of ubiquitinated proteins. In the complex, rpn6 is required for proteasome assembly. This is Probable 26S proteasome regulatory subunit rpn6 (rpn6) from Schizosaccharomyces pombe (strain 972 / ATCC 24843) (Fission yeast).